The sequence spans 348 residues: Holliday junction branch migration complex subunit RuvB (348 aa).

A large ATPase domain (RuvB-L) region spans residues 4 to 184; that stretch reads ADRLIAASGR…FGIVQRLEFY (181 aa). ATP is bound by residues I23, R24, G65, K68, T69, T70, 131–133, R174, Y184, and R221; that span reads EDF. T69 provides a ligand contact to Mg(2+). Residues 185–255 are small ATPAse domain (RuvB-S); that stretch reads NDKDLSTIVS…VADMALNLLD (71 aa). The interval 258–348 is head domain (RuvB-H); the sequence is ERGFDHSDRR…GGDFSGPGDE (91 aa). 3 residues coordinate DNA: R294, R313, and R318.

It belongs to the RuvB family. Homohexamer. Forms an RuvA(8)-RuvB(12)-Holliday junction (HJ) complex. HJ DNA is sandwiched between 2 RuvA tetramers; dsDNA enters through RuvA and exits via RuvB. An RuvB hexamer assembles on each DNA strand where it exits the tetramer. Each RuvB hexamer is contacted by two RuvA subunits (via domain III) on 2 adjacent RuvB subunits; this complex drives branch migration. In the full resolvosome a probable DNA-RuvA(4)-RuvB(12)-RuvC(2) complex forms which resolves the HJ.

It localises to the cytoplasm. The catalysed reaction is ATP + H2O = ADP + phosphate + H(+). In terms of biological role, the RuvA-RuvB-RuvC complex processes Holliday junction (HJ) DNA during genetic recombination and DNA repair, while the RuvA-RuvB complex plays an important role in the rescue of blocked DNA replication forks via replication fork reversal (RFR). RuvA specifically binds to HJ cruciform DNA, conferring on it an open structure. The RuvB hexamer acts as an ATP-dependent pump, pulling dsDNA into and through the RuvAB complex. RuvB forms 2 homohexamers on either side of HJ DNA bound by 1 or 2 RuvA tetramers; 4 subunits per hexamer contact DNA at a time. Coordinated motions by a converter formed by DNA-disengaged RuvB subunits stimulates ATP hydrolysis and nucleotide exchange. Immobilization of the converter enables RuvB to convert the ATP-contained energy into a lever motion, pulling 2 nucleotides of DNA out of the RuvA tetramer per ATP hydrolyzed, thus driving DNA branch migration. The RuvB motors rotate together with the DNA substrate, which together with the progressing nucleotide cycle form the mechanistic basis for DNA recombination by continuous HJ branch migration. Branch migration allows RuvC to scan DNA until it finds its consensus sequence, where it cleaves and resolves cruciform DNA. This Pseudomonas putida (strain ATCC 700007 / DSM 6899 / JCM 31910 / BCRC 17059 / LMG 24140 / F1) protein is Holliday junction branch migration complex subunit RuvB.